Reading from the N-terminus, the 100-residue chain is Small ribosomal subunit protein bS18c (100 aa).

Belongs to the bacterial ribosomal protein bS18 family. Part of the 30S ribosomal subunit.

It is found in the plastid. The protein resides in the chloroplast. This Pleurastrum terricola (Filamentous green alga) protein is Small ribosomal subunit protein bS18c.